Consider the following 376-residue polypeptide: Erythronate-4-phosphate dehydrogenase (376 aa).

2 residues coordinate substrate: Ser45 and Thr67. NAD(+) is bound by residues 127–128 (QV), Asp147, and Thr176. The active site involves Arg209. Asp233 contributes to the NAD(+) binding site. Glu238 is an active-site residue. The Proton donor role is filled by His255. Gly258 is an NAD(+) binding site. Substrate is bound at residue Tyr259.

Belongs to the D-isomer specific 2-hydroxyacid dehydrogenase family. PdxB subfamily. In terms of assembly, homodimer.

It is found in the cytoplasm. The enzyme catalyses 4-phospho-D-erythronate + NAD(+) = (R)-3-hydroxy-2-oxo-4-phosphooxybutanoate + NADH + H(+). It participates in cofactor biosynthesis; pyridoxine 5'-phosphate biosynthesis; pyridoxine 5'-phosphate from D-erythrose 4-phosphate: step 2/5. Functionally, catalyzes the oxidation of erythronate-4-phosphate to 3-hydroxy-2-oxo-4-phosphonooxybutanoate. The polypeptide is Erythronate-4-phosphate dehydrogenase (Aliivibrio fischeri (strain ATCC 700601 / ES114) (Vibrio fischeri)).